The chain runs to 860 residues: DNA mismatch repair protein MutS (860 aa).

Position 620-627 (620-627 (GPNMGGKS)) interacts with ATP.

The protein belongs to the DNA mismatch repair MutS family.

Functionally, this protein is involved in the repair of mismatches in DNA. It is possible that it carries out the mismatch recognition step. This protein has a weak ATPase activity. This Dechloromonas aromatica (strain RCB) protein is DNA mismatch repair protein MutS.